We begin with the raw amino-acid sequence, 176 residues long: ATP-dependent protease subunit HslV (176 aa).

The active site involves Thr4. The Na(+) site is built by Ala159, Cys162, and Thr165.

The protein belongs to the peptidase T1B family. HslV subfamily. In terms of assembly, a double ring-shaped homohexamer of HslV is capped on each side by a ring-shaped HslU homohexamer. The assembly of the HslU/HslV complex is dependent on binding of ATP.

It localises to the cytoplasm. It catalyses the reaction ATP-dependent cleavage of peptide bonds with broad specificity.. Its activity is regulated as follows. Allosterically activated by HslU binding. Functionally, protease subunit of a proteasome-like degradation complex believed to be a general protein degrading machinery. The protein is ATP-dependent protease subunit HslV of Wolbachia sp. subsp. Brugia malayi (strain TRS).